The primary structure comprises 81 residues: MTDLFSSPDHTLDALGLRCPEPVMMVRKTVRNMQPGETLLIIADDPATTRDIPGFCTFMEHELVAKETDGLPYRYLIRKGH.

C19 serves as the catalytic Cysteine persulfide intermediate.

It belongs to the sulfur carrier protein TusA family. Interacts with IscS.

It localises to the cytoplasm. It functions in the pathway tRNA modification. Functionally, sulfur carrier protein involved in sulfur trafficking in the cell. Part of a sulfur-relay system required for 2-thiolation during synthesis of 2-thiouridine of the modified wobble base 5-methylaminomethyl-2-thiouridine (mnm(5)s(2)U) in tRNA. Interacts with IscS and stimulates its cysteine desulfurase activity. Accepts an activated sulfur from IscS, which is then transferred to TusD, and thus determines the direction of sulfur flow from IscS to 2-thiouridine formation. Also appears to be involved in sulfur transfer for the biosynthesis of molybdopterin. The sequence is that of Sulfur carrier protein TusA from Escherichia fergusonii (strain ATCC 35469 / DSM 13698 / CCUG 18766 / IAM 14443 / JCM 21226 / LMG 7866 / NBRC 102419 / NCTC 12128 / CDC 0568-73).